We begin with the raw amino-acid sequence, 267 residues long: NAD kinase (267 aa).

Aspartate 45 acts as the Proton acceptor in catalysis. NAD(+)-binding positions include 45–46, 121–122, arginine 147, aspartate 149, 160–165, and alanine 184; these read DG, NE, and TAYSKS.

It belongs to the NAD kinase family. A divalent metal cation serves as cofactor.

Its subcellular location is the cytoplasm. It carries out the reaction NAD(+) + ATP = ADP + NADP(+) + H(+). In terms of biological role, involved in the regulation of the intracellular balance of NAD and NADP, and is a key enzyme in the biosynthesis of NADP. Catalyzes specifically the phosphorylation on 2'-hydroxyl of the adenosine moiety of NAD to yield NADP. The sequence is that of NAD kinase from Lactobacillus acidophilus (strain ATCC 700396 / NCK56 / N2 / NCFM).